A 205-amino-acid polypeptide reads, in one-letter code: Ribonuclease HII (205 aa).

An RNase H type-2 domain is found at 13–205; the sequence is TIVAGVDEVG…APVKYMLSMC (193 aa). Positions 19, 20, and 114 each coordinate a divalent metal cation.

Belongs to the RNase HII family. The cofactor is Mn(2+). Mg(2+) serves as cofactor.

It is found in the cytoplasm. It catalyses the reaction Endonucleolytic cleavage to 5'-phosphomonoester.. Functionally, endonuclease that specifically degrades the RNA of RNA-DNA hybrids. This chain is Ribonuclease HII, found in Blochmanniella floridana.